The chain runs to 383 residues: Putative glutamate--cysteine ligase 2-1 (383 aa).

The protein belongs to the glutamate--cysteine ligase type 2 family. YbdK subfamily.

The catalysed reaction is L-cysteine + L-glutamate + ATP = gamma-L-glutamyl-L-cysteine + ADP + phosphate + H(+). ATP-dependent carboxylate-amine ligase which exhibits weak glutamate--cysteine ligase activity. This is Putative glutamate--cysteine ligase 2-1 from Legionella pneumophila (strain Corby).